Consider the following 343-residue polypeptide: CMP-N-acetylneuraminate-beta-galactosamide-alpha-2,3-sialyltransferase 1 (343 aa).

Topologically, residues 1-11 (MAPMRKKSTLK) are cytoplasmic. The helical; Signal-anchor for type II membrane protein transmembrane segment at 12–27 (LLTLLVLFIFLTSFFL) threads the bilayer. Asparagine 28 carries N-linked (GlcNAc...) asparagine glycosylation. Topologically, residues 28–343 (NYSHTVVTTA…INKIRIFKGR (316 aa)) are lumenal. Cystine bridges form between cysteine 62–cysteine 67, cysteine 64–cysteine 142, and cysteine 145–cysteine 284. Asparagine 82 is a glycosylation site (N-linked (GlcNAc...) asparagine). Position 108 (glutamine 108) interacts with substrate. Asparagine 117 carries N-linked (GlcNAc...) asparagine glycosylation. The substrate site is built by asparagine 150, asparagine 173, tyrosine 233, tyrosine 269, glycine 273, glycine 293, histidine 302, and histidine 319. A glycan (N-linked (GlcNAc...) asparagine) is linked at asparagine 326.

The protein belongs to the glycosyltransferase 29 family. Post-translationally, the soluble form derives from the membrane form by proteolytic processing. The long isoform is abundant in salivary gland, liver, lung, and colon mucosa. Both long and short forms are detected in submaxillary salivary glands.

It localises to the golgi apparatus. The protein resides in the golgi stack membrane. The protein localises to the trans-Golgi network membrane. Its subcellular location is the secreted. It catalyses the reaction a beta-D-galactosyl-(1-&gt;3)-N-acetyl-alpha-D-galactosaminyl derivative + CMP-N-acetyl-beta-neuraminate = an N-acetyl-alpha-neuraminyl-(2-&gt;3)-beta-D-galactosyl-(1-&gt;3)-N-acetyl-alpha-D-galactosaminyl derivative + CMP + H(+). The enzyme catalyses a ganglioside GM1 (d18:1(4E)) + CMP-N-acetyl-beta-neuraminate = a ganglioside GD1a (d18:1(4E)) + CMP + H(+). It carries out the reaction ganglioside GM1 (d18:1(4E)/18:0) + CMP-N-acetyl-beta-neuraminate = ganglioside GD1a (18:1(4E)/18:0) + CMP + H(+). The catalysed reaction is a ganglioside GA1 (d18:1(4E)) + CMP-N-acetyl-beta-neuraminate = a ganglioside GM1b (d18:1(4E)) + CMP + H(+). It catalyses the reaction a ganglioside GD1b + CMP-N-acetyl-beta-neuraminate = a ganglioside GT1b + CMP + H(+). The enzyme catalyses a 3-O-[beta-D-galactosyl-(1-&gt;3)-N-acetyl-alpha-D-galactosaminyl]-L-threonyl-[protein] + CMP-N-acetyl-beta-neuraminate = a 3-O-[N-acetyl-alpha-neuraminyl-(2-&gt;3)-beta-D-galactosyl-(1-&gt;3)-N-acetyl-alpha-D-galactosaminyl]-L-threonyl-[protein] + CMP + H(+). It carries out the reaction a 3-O-[beta-D-galactosyl-(1-&gt;3)-N-acetyl-alpha-D-galactosaminyl]-L-seryl-[protein] + CMP-N-acetyl-beta-neuraminate = 3-O-[N-acetyl-alpha-neuraminyl-(2-&gt;3)-beta-D-galactosyl-(1-&gt;3)-N-acetyl-alpha-D-galactosaminyl]-L-seryl-[protein] + CMP + H(+). Its pathway is protein modification; protein glycosylation. It participates in glycolipid biosynthesis. A beta-galactoside alpha2-&gt;3 sialyltransferase involved in terminal sialylation of glycoproteins and glycolipids. Catalyzes the transfer of sialic acid (N-acetyl-neuraminic acid; Neu5Ac) from the nucleotide sugar donor CMP-Neu5Ac onto acceptor Galbeta-(1-&gt;3)-GalNAc-terminated glycoconjugates through an alpha2-3 linkage. Adds sialic acid to the core 1 O-glycan, Galbeta-(1-&gt;3)-GalNAc-O-Ser/Thr, which is a major structure of mucin-type O-glycans. As part of a homeostatic mechanism that regulates CD8-positive T cell numbers, sialylates core 1 O-glycans of T cell glycoproteins, SPN/CD43 and PTPRC/CD45. Prevents premature apoptosis of thymic CD8-positive T cells prior to peripheral emigration, whereas in the secondary lymphoid organs controls the survival of CD8-positive memory T cells generated following a successful immune response. Transfers sialic acid to asialofetuin, presumably onto Galbeta-(1-&gt;3)-GalNAc-O-Ser. Sialylates GM1a, GA1 and GD1b gangliosides to form GD1a, GM1b and GT1b, respectively. The polypeptide is CMP-N-acetylneuraminate-beta-galactosamide-alpha-2,3-sialyltransferase 1 (ST3GAL1) (Sus scrofa (Pig)).